The primary structure comprises 86 residues: CLAVATA3/ESR (CLE)-related protein 7 (86 aa).

The N-terminal stretch at 1-22 is a signal peptide; it reads MASKALLLFVMLTFLLVIEMEG. N-linked (GlcNAc...) asparagine glycosylation occurs at asparagine 46. Residues 63–86 are disordered; it reads VDRFSPGGPDPQHHSYPLSSKPRI. Hydroxyproline is present on residues proline 68 and proline 71. Proline 71 is a glycosylation site (O-linked (Ara...) hydroxyproline).

This sequence belongs to the CLV3/ESR signal peptide family. The O-glycosylation (arabinosylation) of the hydroxyproline Pro-71 enhances binding affinity of the CLE7p peptide for its receptor. Expressed in roots and seedlings.

It is found in the secreted. Its subcellular location is the extracellular space. Its function is as follows. Extracellular signal peptide that regulates cell fate. The sequence is that of CLAVATA3/ESR (CLE)-related protein 7 from Arabidopsis thaliana (Mouse-ear cress).